A 175-amino-acid polypeptide reads, in one-letter code: NADH-ubiquinone oxidoreductase chain 6 (175 aa).

6 helical membrane-spanning segments follow: residues 1–21 (MMYIVFIMSVLYVVGFIGFSS), 25–45 (PVYGGMSLVVSGGLGCGIIMG), 51–71 (LGLVVFLVYLGGMMVVFGYTI), 87–107 (VVLGAFLVGLLMEVFMIMWLF), 112–132 (ELVGFYFGGLEDLMVLGEGGF), and 148–168 (YGFWFLAMAGWMLFVSIFIAI).

This sequence belongs to the complex I subunit 6 family. In terms of assembly, core subunit of respiratory chain NADH dehydrogenase (Complex I) which is composed of 45 different subunits.

It is found in the mitochondrion inner membrane. It catalyses the reaction a ubiquinone + NADH + 5 H(+)(in) = a ubiquinol + NAD(+) + 4 H(+)(out). Functionally, core subunit of the mitochondrial membrane respiratory chain NADH dehydrogenase (Complex I) which catalyzes electron transfer from NADH through the respiratory chain, using ubiquinone as an electron acceptor. Essential for the catalytic activity and assembly of complex I. The polypeptide is NADH-ubiquinone oxidoreductase chain 6 (MT-ND6) (Loxodonta africana (African elephant)).